The following is a 672-amino-acid chain: MRSIRSFANDDRHVMVKHSTIYPSPEELEAVQNMVSTVECALKHVSDWLDETNKGTKPEGETEVKKDEAVENYSKDQGGRTLCGVMRIGLVAKGLLIKDDMDLELVLMCKDKPTETLLNTVKDNLPIQIQKLTEEKYQVEQCINEASIIIRNTKEPTLTLKVILTSPLIRDELEKKDGENVMMKDPPDLLDRQKCLNALASLRHAKWFQARANGLKSCVIVLRILRDLCNRVPTWAPLKGWPLELICEKSIGTCNRPLGAGEALRRVMECLASGILLPGGPGLHDPCERDPTDALSYMTTQQKEDITHSAQHALRLSAFGQIYKVLEMDPLPSSKPFQKYSWSVTDKEGAGSSALKRPFEDGLGDDKDPNKKMKRNLRKILDSKAIDLMNALMRLNQIRPGLQYKLLSQSGPVHAPVFTMSVDVDGTTYEASGPSKKTAKLHVAVKVLQAMGYPTGFDADIECISSDEKSDNESKNDTVSSNSSNNTGNSTTETSSTLEVRTQGPILTASGKNPVMELNEKRRGLKYELISETGGSHDKRFVMEVEVDGQKFRGAGPNKKVAKASAALAALEKLFSGPNAANNKKKKIIPQAKGVVNTAVSAAVQAVRGRGRGTLTRGAFVGATAAPGYIAPGYGTPYGYSTAAPAYGLPKRMVLLPVMKFPTYPVPHYSFF.

In terms of domain architecture, DZF spans 5 to 363 (RSFANDDRHV…ALKRPFEDGL (359 aa)). The segment at 349 to 371 (GAGSSALKRPFEDGLGDDKDPNK) is disordered. The span at 357–371 (RPFEDGLGDDKDPNK) shows a compositional bias: basic and acidic residues. The region spanning 387-453 (DLMNALMRLN…AVKVLQAMGY (67 aa)) is the DRBM 1 domain. Over residues 467-476 (DEKSDNESKN) the composition is skewed to basic and acidic residues. Residues 467 to 514 (DEKSDNESKNDTVSSNSSNNTGNSTTETSSTLEVRTQGPILTASGKNP) form a disordered region. Over residues 477–497 (DTVSSNSSNNTGNSTTETSST) the composition is skewed to low complexity. One can recognise a DRBM 2 domain in the interval 510-576 (SGKNPVMELN…ALAALEKLFS (67 aa)). Asymmetric dimethylarginine is present on residues Arg-612 and Arg-617.

In terms of assembly, interacts with EIF2AK2. Associates with microtubules; it is unsure whether such interaction is direct or indirect. As to expression, isoform 2 is expressed in spermatocytes (at protein level). Expressed in testis, thymus, ovary, liver, kidney, heart, spleen and brain. Expressed in cortex, dentate gyrus and Purkinje cell layer and granule cells of the cerebellum.

It is found in the cytoplasm. It localises to the cytoskeleton. Involved in spermatogenesis and sperm function. Plays a role in regulation of cell growth. Binds to double-stranded DNA and RNA. Binds most efficiently to poly(I:C) RNA than to poly(dI:dC) DNA. Also binds to single-stranded poly(G) RNA. Binds non-specifically to the mRNA PRM1 3'-UTR and adenovirus VA RNA. The sequence is that of Spermatid perinuclear RNA-binding protein (Strbp) from Mus musculus (Mouse).